We begin with the raw amino-acid sequence, 383 residues long: Fatty acid hydroxylase ahd1 (383 aa).

4 helical membrane passes run 84 to 104 (VMGL…NKSW), 123 to 143 (TVHT…LFAL), 172 to 192 (LIPV…IIYY), and 214 to 236 (VAQW…RALH). Residues 217 to 341 (WLVCLLMEDI…VGLLDAIFKT (125 aa)) enclose the Fatty acid hydroxylase domain. N342 carries an N-linked (GlcNAc...) asparagine glycan.

Belongs to the sterol desaturase family.

It is found in the membrane. It participates in secondary metabolite biosynthesis. Functionally, fatty acid hydroxylase; part of the gene cluster that mediates the biosynthesis of the glycolipid biosurfactant ustilagic acid (UA). UA is a secreted cellobiose glycolipid that is toxic for many microorganisms and confers biocontrol activity to U.maydis. UA consists of 15,16-dihydroxypalmitic or 2,15,16-trihydroxypalmitic acid, which is O-glycosidically linked to cellobiose at its terminal hydroxyl group. In addition, the cellobiose moiety is acetylated and acylated with a short-chain hydroxy fatty acid. UA biosynthesis starts with omega-hydroxylation of palmitic acid catalyzed by the cytochrome P450 monooxygenase cyp1. Terminal hydroxylation of palmitic acid precedes subterminal hydroxylation catalyzed by the cytochrome P450 monooxygenase cyp2. Sequential glucosylation of the hydroxy fatty acid is probably catalyzed by the glycosyltransferase ugt1. The cellobiose lipid is further decorated by acetylation of the proximal glucose residue and by acylation with a short-chain beta-hydroxy fatty acid at the distal glucose residue. The acyltransferase uat1 may be a good candidate for catalyzing either acetylation or acylation of the cellobiose lipid. The fatty acid synthase fas2 may be involved in synthesis of the carbon backbone of the short-chain beta-hydroxy fatty acid esterified to the cellobiose disaccharide. The secreted UA consists of a mixture of both alpha-hydroxylated and non-hydroxylated glycolipids; therefore, alpha-hydroxylation of the long-chain fatty, catalyzed by the fatty acid hydroxylase ahd1, occurs late in UA biosynthesis and may be the last step before secretion. The chain is Fatty acid hydroxylase ahd1 from Mycosarcoma maydis (Corn smut fungus).